Consider the following 213-residue polypeptide: Glycerol-3-phosphate acyltransferase (213 aa).

Transmembrane regions (helical) follow at residues 3–23 (IIILLLIASYLLGAIPFGLWI), 48–68 (ILGVKAGIAVFIFDLLKGTLA), 71–91 (LPLIFHINGVSPLIFGLLAVI), 119–139 (PFFLLYLLVIFILVLWLFSMI), 144–164 (VVAAIFALLGILIFPSFGFIL), and 165–185 (TSYDLLFSIIIFALAIIIIFR).

It belongs to the PlsY family. As to quaternary structure, probably interacts with PlsX.

It is found in the cell membrane. The enzyme catalyses an acyl phosphate + sn-glycerol 3-phosphate = a 1-acyl-sn-glycero-3-phosphate + phosphate. It participates in lipid metabolism; phospholipid metabolism. Its function is as follows. Catalyzes the transfer of an acyl group from acyl-phosphate (acyl-PO(4)) to glycerol-3-phosphate (G3P) to form lysophosphatidic acid (LPA). This enzyme utilizes acyl-phosphate as fatty acyl donor, but not acyl-CoA or acyl-ACP. The chain is Glycerol-3-phosphate acyltransferase from Lactococcus lactis subsp. cremoris (strain SK11).